Consider the following 834-residue polypeptide: Glycerol-3-phosphate acyltransferase (834 aa).

The short motif at 309–314 (CHRSHI) is the HXXXXD motif element.

Belongs to the GPAT/DAPAT family.

The protein resides in the cell inner membrane. The enzyme catalyses sn-glycerol 3-phosphate + an acyl-CoA = a 1-acyl-sn-glycero-3-phosphate + CoA. The protein operates within phospholipid metabolism; CDP-diacylglycerol biosynthesis; CDP-diacylglycerol from sn-glycerol 3-phosphate: step 1/3. The polypeptide is Glycerol-3-phosphate acyltransferase (Pseudomonas fluorescens (strain Pf0-1)).